Consider the following 378-residue polypeptide: Lipoyl synthase, mitochondrial (378 aa).

[4Fe-4S] cluster contacts are provided by Cys97, Cys102, Cys108, Cys128, Cys132, Cys135, and Ser343. The region spanning 111-332 (GSDKSAATAT…RQRALDMGFL (222 aa)) is the Radical SAM core domain.

It belongs to the radical SAM superfamily. Lipoyl synthase family. [4Fe-4S] cluster is required as a cofactor.

The protein localises to the mitochondrion. It carries out the reaction [[Fe-S] cluster scaffold protein carrying a second [4Fe-4S](2+) cluster] + N(6)-octanoyl-L-lysyl-[protein] + 2 oxidized [2Fe-2S]-[ferredoxin] + 2 S-adenosyl-L-methionine + 4 H(+) = [[Fe-S] cluster scaffold protein] + N(6)-[(R)-dihydrolipoyl]-L-lysyl-[protein] + 4 Fe(3+) + 2 hydrogen sulfide + 2 5'-deoxyadenosine + 2 L-methionine + 2 reduced [2Fe-2S]-[ferredoxin]. It functions in the pathway protein modification; protein lipoylation via endogenous pathway; protein N(6)-(lipoyl)lysine from octanoyl-[acyl-carrier-protein]: step 2/2. Its function is as follows. Catalyzes the radical-mediated insertion of two sulfur atoms into the C-6 and C-8 positions of the octanoyl moiety bound to the lipoyl domains of lipoate-dependent enzymes, thereby converting the octanoylated domains into lipoylated derivatives. This chain is Lipoyl synthase, mitochondrial, found in Phaeosphaeria nodorum (strain SN15 / ATCC MYA-4574 / FGSC 10173) (Glume blotch fungus).